Reading from the N-terminus, the 250-residue chain is Small ribosomal subunit protein uS2 (250 aa).

It belongs to the universal ribosomal protein uS2 family.

In Teredinibacter turnerae (strain ATCC 39867 / T7901), this protein is Small ribosomal subunit protein uS2.